Reading from the N-terminus, the 239-residue chain is MNRPFFIALDFDEHAKRQRFLESFAAETLDVKIGMELFYREGLSVVHELKEAGYRLFLDLKLHDIPNTVGRTMRALAELDVDVVNVHAAGGKAMMEAALEGLDAGTRAGKQRPKLIAVTQLTSTDSRMLAEELLIDKAMDEVVVRYAQLAQESGLDGVVCSAHEVPLIRAACSDRFLTVTPGIRRQVDQVGDQVRVVTPGEAKALGSWAIVVGRSITAAADPLAVYREMNQDWKGATEH.

Substrate-binding positions include aspartate 10, lysine 32, 59–68 (DLKLHDIPNT), threonine 122, arginine 184, glutamine 193, glycine 213, and arginine 214. Lysine 61 functions as the Proton donor in the catalytic mechanism.

This sequence belongs to the OMP decarboxylase family. Type 1 subfamily. Homodimer.

It carries out the reaction orotidine 5'-phosphate + H(+) = UMP + CO2. Its pathway is pyrimidine metabolism; UMP biosynthesis via de novo pathway; UMP from orotate: step 2/2. Its function is as follows. Catalyzes the decarboxylation of orotidine 5'-monophosphate (OMP) to uridine 5'-monophosphate (UMP). This Shouchella clausii (strain KSM-K16) (Alkalihalobacillus clausii) protein is Orotidine 5'-phosphate decarboxylase.